The sequence spans 504 residues: Activin receptor type-1-like (504 aa).

The N-terminal stretch at 1 to 20 is a signal peptide; it reads MTLGIFRRVFLMLSVALGLT. Residues 21–121 lie on the Extracellular side of the membrane; that stretch reads KGDLVKPSRG…EEPEVDAHLP (101 aa). Asn34 is a glycosylation site (N-linked (GlcNAc...) asparagine). Intrachain disulfides connect Cys35-Cys52, Cys37-Cys42, and Cys47-Cys70. Residues 74-77 form a mediates specificity for BMP ligand region; it reads NQEL. 2 cysteine pairs are disulfide-bonded: Cys78-Cys90 and Cys91-Cys96. Residue Asn99 is glycosylated (N-linked (GlcNAc...) asparagine). A helical transmembrane segment spans residues 122 to 142; the sequence is LILGPVLALLVLVALGTLGLW. The Cytoplasmic portion of the chain corresponds to 143 to 504; it reads RVRRRQEKQR…QNPEKPKVIH (362 aa). Residues Ser156, Ser161, and Ser162 each carry the phosphoserine modification. Residues 173-202 form the GS domain; it reads SMLGDFLVSDCTTGSGSGLPFLVQRTVARQ. One can recognise a Protein kinase domain in the interval 203-504; the sequence is VALVECVGKG…QNPEKPKVIH (302 aa). ATP contacts are provided by residues 209 to 217 and Lys230; that span reads VGKGRYGEV. Asp331 serves as the catalytic Proton acceptor.

It belongs to the protein kinase superfamily. TKL Ser/Thr protein kinase family. TGFB receptor subfamily. As to quaternary structure, interacts with TSC22D1/TSC-22. The cofactor is Mg(2+). It depends on Mn(2+) as a cofactor. As to expression, urogenital ridge, testis, ovary, brain and lung. In lung, found exclusively in pulmonary vessels of all sizes. Also expressed in aorta, vena cava and certain blood vessels of kidney, spleen, heart and intestine. For most blood vessels, a higher level of expression is found in endothelium than in adjacent smooth muscle.

It localises to the cell membrane. It catalyses the reaction L-threonyl-[receptor-protein] + ATP = O-phospho-L-threonyl-[receptor-protein] + ADP + H(+). It carries out the reaction L-seryl-[receptor-protein] + ATP = O-phospho-L-seryl-[receptor-protein] + ADP + H(+). In terms of biological role, type I receptor for TGF-beta family ligands BMP9/GDF2 and BMP10 and important regulator of normal blood vessel development. On ligand binding, forms a receptor complex consisting of two type II and two type I transmembrane serine/threonine kinases. Type II receptors phosphorylate and activate type I receptors which autophosphorylate, then bind and activate SMAD transcriptional regulators. May bind activin as well. This is Activin receptor type-1-like (Acvrl1) from Rattus norvegicus (Rat).